We begin with the raw amino-acid sequence, 873 residues long: uncharacterized protein (873 aa).

7 disordered regions span residues 1–24, 175–251, 375–423, 506–540, 568–592, 662–773, and 822–855; these read MSNK…SMSK, SSAV…TSIS, PSRH…AKKP, DSES…ATRS, DQSS…APEY, ANDS…TSQI, and ANPY…EEPI. Residues 211–225 show a composition bias toward basic and acidic residues; the sequence is KDSDRSQTKNTHEET. Basic residues predominate over residues 376–385; it reads SRHHSHRKKE. The segment covering 574-586 has biased composition (basic residues); it reads PGRHFGKTGRSHF. Residues 665 to 686 are compositionally biased toward low complexity; the sequence is SPNSSESLESLNNQSYSSSPYS. Polar residues predominate over residues 698 to 740; that stretch reads QSLNDSPQTSDFKASNLNDSSSNVHSIFQTRETTSPSVQNKTP. Basic and acidic residues predominate over residues 743–755; it reads YHRELKSSKDGHE. The span at 758-773 shows a compositional bias: low complexity; sequence SPLVSSSPSGSFTSQI. Residues 823–855 are compositionally biased toward polar residues; that stretch reads NPYSTNNDGNPSNNTSDVEVNETSMNDNSEEPI.

The protein localises to the cytoplasm. It is found in the vacuole membrane. This is an uncharacterized protein from Schizosaccharomyces pombe (strain 972 / ATCC 24843) (Fission yeast).